We begin with the raw amino-acid sequence, 397 residues long: 1-deoxy-D-xylulose 5-phosphate reductoisomerase (397 aa).

NADPH-binding residues include Thr12, Gly13, Ser14, Ile15, Gly38, Lys39, Asn40, and Asn126. Lys127 contacts 1-deoxy-D-xylulose 5-phosphate. Glu128 lines the NADPH pocket. Asp152 contacts Mn(2+). 1-deoxy-D-xylulose 5-phosphate is bound by residues Ser153, Glu154, Ser188, and His211. Glu154 is a binding site for Mn(2+). Position 217 (Gly217) interacts with NADPH. Ser224, Asn229, Lys230, and Glu233 together coordinate 1-deoxy-D-xylulose 5-phosphate. A Mn(2+)-binding site is contributed by Glu233.

Belongs to the DXR family. Mg(2+) is required as a cofactor. The cofactor is Mn(2+).

It catalyses the reaction 2-C-methyl-D-erythritol 4-phosphate + NADP(+) = 1-deoxy-D-xylulose 5-phosphate + NADPH + H(+). Its pathway is isoprenoid biosynthesis; isopentenyl diphosphate biosynthesis via DXP pathway; isopentenyl diphosphate from 1-deoxy-D-xylulose 5-phosphate: step 1/6. In terms of biological role, catalyzes the NADPH-dependent rearrangement and reduction of 1-deoxy-D-xylulose-5-phosphate (DXP) to 2-C-methyl-D-erythritol 4-phosphate (MEP). The polypeptide is 1-deoxy-D-xylulose 5-phosphate reductoisomerase (Haemophilus influenzae (strain PittGG)).